We begin with the raw amino-acid sequence, 234 residues long: ATP-dependent dethiobiotin synthetase BioD (234 aa).

12 to 17 (DVGKTF) is an ATP binding site. Residue Thr-16 participates in Mg(2+) binding. Lys-37 is an active-site residue. Ser-41 is a substrate binding site. ATP is bound by residues Asp-52, 118 to 121 (EGAG), and 178 to 179 (SQ). Asp-52 and Glu-118 together coordinate Mg(2+).

This sequence belongs to the dethiobiotin synthetase family. As to quaternary structure, homodimer. Mg(2+) serves as cofactor.

Its subcellular location is the cytoplasm. The enzyme catalyses (7R,8S)-7,8-diammoniononanoate + CO2 + ATP = (4R,5S)-dethiobiotin + ADP + phosphate + 3 H(+). Its pathway is cofactor biosynthesis; biotin biosynthesis; biotin from 7,8-diaminononanoate: step 1/2. In terms of biological role, catalyzes a mechanistically unusual reaction, the ATP-dependent insertion of CO2 between the N7 and N8 nitrogen atoms of 7,8-diaminopelargonic acid (DAPA, also called 7,8-diammoniononanoate) to form a ureido ring. The polypeptide is ATP-dependent dethiobiotin synthetase BioD (Phenylobacterium zucineum (strain HLK1)).